Reading from the N-terminus, the 291-residue chain is Ribosomal protein L11 methyltransferase (291 aa).

Thr136, Gly159, Asp181, and Asn228 together coordinate S-adenosyl-L-methionine.

This sequence belongs to the methyltransferase superfamily. PrmA family.

It is found in the cytoplasm. It carries out the reaction L-lysyl-[protein] + 3 S-adenosyl-L-methionine = N(6),N(6),N(6)-trimethyl-L-lysyl-[protein] + 3 S-adenosyl-L-homocysteine + 3 H(+). In terms of biological role, methylates ribosomal protein L11. This is Ribosomal protein L11 methyltransferase from Sinorhizobium fredii (strain NBRC 101917 / NGR234).